A 398-amino-acid polypeptide reads, in one-letter code: Alpha-monoglucosyldiacylglycerol synthase (398 aa).

It belongs to the glycosyltransferase group 1 family. Glycosyltransferase 4 subfamily. Requires Mg(2+) as cofactor.

The protein localises to the cell membrane. The enzyme catalyses a 1,2-diacyl-sn-glycerol + UDP-alpha-D-glucose = a 1,2-diacyl-3-O-(alpha-D-glucopyranosyl)-sn-glycerol + UDP + H(+). Its activity is regulated as follows. Activated by the negatively charged lipids phosphatidylglycerol (PG), cardiolipin (CL), dodecylphosphate-rac-glycerol (PDG), 1,2-dioleoyl-phosphatidylglycerol (DOPG) and phosphatidylserine (PS). Glucosyltransferase involved in the biosynthesis of the non-bilayer-prone membrane lipid alpha-monoglucosyldiacylglycerol. This is a major component for maintaining a certain anionic lipid surface charge density, for balancing the bilayer to non-bilayer phase equilibria and for keeping a constant lipid bilayer spontaneous curvature (curvature packing stress). Catalyzes the transfer of a glucosyl residue from UDP-Glc to diacylglycerol (DAG) acceptor to form the corresponding alpha-glucosyl-DAG (1,2-diacyl-3-O-(alpha-D-glucopyranosyl)-sn-glycerol). It can only use UDP-Glc as sugar donor and DAG is the preferred substrate. This Acholeplasma laidlawii protein is Alpha-monoglucosyldiacylglycerol synthase (mgs).